Reading from the N-terminus, the 338-residue chain is Protein FosB (338 aa).

2 disordered regions span residues 1–54 (MFQA…PGSF) and 80–179 (AQSQ…RREL). Positions 13–31 (SRCSSSPSAESQYLSSVDS) are enriched in polar residues. S27 is subject to Phosphoserine. The segment covering 123–137 (PSTSTSTSGPVSARP) has biased composition (low complexity). The bZIP domain occupies 155-218 (EEKRRVRRER…ERLEFVLVAH (64 aa)). Positions 157–182 (KRRVRRERNKLAAAKCRNRRRELTDR) are basic motif. The tract at residues 183-211 (LQAETDQLEEEKAELESEIAELQKEKERL) is leucine-zipper. 2 disordered regions span residues 222–276 (CKIP…PPNL) and 315–338 (AGSQ…LLAL). The span at 256–265 (LPPPPPPPLP) shows a compositional bias: pro residues. Positions 266-276 (FQSSRDAPPNL) are enriched in polar residues.

Belongs to the bZIP family. Fos subfamily. As to quaternary structure, heterodimer; binds to DNA as heterodimer. Component of an AP-1 transcription factor complex; composed of FOS-JUN heterodimers. As part of the AP-1 transcription factor complex, forms heterodimers with JUN, JUNB or JUND, thereby binding to the AP-1 consensus sequence and stimulating transcription. In terms of processing, phosphorylated; phosphorylation is induced by chronic electroconvulsive seizure (ECS) treatment. As to expression, expressed in brain. Expressed in pyramidal cells in CA1 and CA3, in the dentate gyrus and the nucleus accumbens (at protein level).

The protein localises to the nucleus. Heterodimerizes with proteins of the JUN family to form an AP-1 transcription factor complex, thereby enhancing their DNA binding activity to an AP-1 consensus sequence 5'-TGA[GC]TCA-3' and enhancing their transcriptional activity. Exhibits transactivation activity in vitro. As part of the AP-1 complex, facilitates enhancer selection together with cell-type-specific transcription factors by collaboratively binding to nucleosomal enhancers and recruiting the SWI/SNF (BAF) chromatin remodeling complex to establish accessible chromatin. Together with JUN, plays a role in activation-induced cell death of T cells by binding to the AP-1 promoter site of FASLG/CD95L, and inducing its transcription in response to activation of the TCR/CD3 signaling pathway. Involved in the display of nurturing behavior towards newborns. May play a role in neurogenesis in the hippocampus and in learning and memory-related tasks by regulating the expression of various genes involved in neurogenesis, depression and epilepsy. Implicated in behavioral responses related to morphine reward and spatial memory. The polypeptide is Protein FosB (Rattus norvegicus (Rat)).